The primary structure comprises 413 residues: Phosphatidylcholine:ceramide cholinephosphotransferase 1 (413 aa).

The SAM domain maps to 7–70; it reads WSPKKVADWL…LDMIETLKME (64 aa). Ser8 is modified (phosphoserine). 5 consecutive transmembrane segments (helical) span residues 136–156, 184–204, 215–235, 276–296, and 304–324; these read FLAF…ISVV, FSIC…QWLL, FFCI…VTTL, MCGD…YLFI, and LWWY…CILL. His285 is a catalytic residue. At 325-413 the chain is on the cytoplasmic side; sequence AHDHYTVDVV…VKYSRLVNDT (89 aa). Active-site residues include His328 and Asp332.

It belongs to the sphingomyelin synthase family. In terms of tissue distribution, brain, heart, kidney, liver, muscle and stomach.

It is found in the golgi apparatus membrane. It catalyses the reaction an N-acylsphing-4-enine + a 1,2-diacyl-sn-glycero-3-phosphocholine = a sphingomyelin + a 1,2-diacyl-sn-glycerol. The enzyme catalyses an N-acylsphinganine + a 1,2-diacyl-sn-glycero-3-phosphocholine = an N-acylsphinganine-1-phosphocholine + a 1,2-diacyl-sn-glycerol. The catalysed reaction is an N-acyl-(4R)-4-hydroxysphinganine + a 1,2-diacyl-sn-glycero-3-phosphocholine = an N-acyl-(4R)-4-hydroxysphinganine-phosphocholine + a 1,2-diacyl-sn-glycerol. It carries out the reaction 1-(9Z-octadecenoyl)-2-acyl-sn-3-glycerol + a sphingomyelin = a 1-(9Z-octadecenoyl)-2-acyl-sn-glycero-3-phosphocholine + an N-acylsphing-4-enine. It catalyses the reaction N-hexadecanoylsphinganine + a 1,2-diacyl-sn-glycero-3-phosphocholine = N-hexadecanoyl-sphinganine-1-phosphocholine + a 1,2-diacyl-sn-glycerol. The enzyme catalyses N-hexadecanoyl-(4R)-hydroxysphinganine + a 1,2-diacyl-sn-glycero-3-phosphocholine = N-hexadecanoyl-(4R)-hydroxysphinganine-phosphocholine + a 1,2-diacyl-sn-glycerol. The catalysed reaction is an N-acylsphing-4-enine + a 1,2-diacyl-sn-glycero-3-phosphoethanolamine = an N-acylsphing-4-enine 1-phosphoethanolamine + a 1,2-diacyl-sn-glycerol. It functions in the pathway sphingolipid metabolism. Its activity is regulated as follows. Inhibited by bacterial PC-phospholipase C inhibitor D609. Functionally, major sphingomyelin synthase at the Golgi apparatus. Catalyzes the reversible transfer of phosphocholine moiety in sphingomyelin biosynthesis: in the forward reaction transfers phosphocholine head group of phosphatidylcholine (PC) on to ceramide (CER) to form ceramide phosphocholine (sphingomyelin, SM) and diacylglycerol (DAG) as by-product, and in the reverse reaction transfers phosphocholine from SM to DAG to form PC and CER. The direction of the reaction depends on the levels of CER and DAG in Golgi membranes. Converts the newly synthesized CER, that is transported from the endoplasmic reticulum to the trans-Golgi by the Cer transport protein (CERT), to SM. Can form a heteromeric complex with glucosylceramide synthase (GCS) increasing SMS activity and reducing glucosylceramide synthesis, a critical mechanism that controls the metabolic fate of CER in the Golgi. Does not use free phosphorylcholine or CDP-choline as donor. Can also transfer phosphoethanolamine head group of phosphatidylethanolamine (PE) on to CER to form ceramide phosphoethanolamine (CPE). Regulates receptor-mediated signal transduction via mitogenic DAG and proapoptotic CER, as well as via SM, a structural component of membrane rafts that serve as platforms for signal transduction and protein sorting. Plays a role in secretory transport via regulation of DAG pool at the Golgi apparatus and its downstream effects on PRKD1. The protein is Phosphatidylcholine:ceramide cholinephosphotransferase 1 (SGMS1) of Homo sapiens (Human).